The sequence spans 396 residues: E3 ubiquitin-protein transferase MAEA (396 aa).

Residues 1–124 (MAVQESAVQL…AAASVWKRKR (124 aa)) form an extracellular and involved in cell to cell contact region. The residue at position 28 (T28) is a Phosphothreonine. Residues 121–153 (KRKRMDRMMVEHLLRCGYYNTAVKLARQSGIED) enclose the LisH domain. One can recognise a CTLH domain in the interval 159-216 (MFLTAKEVEESLERRETATCLAWCHDNKSRLRKMKSCLEFSLRIQEFIELIRQNKRLD). The RING-Gid-type zinc-finger motif lies at 314–381 (CPVCSRSLNK…QDDKVVCPRT (68 aa)).

In terms of assembly, identified in the CTLH complex that contains GID4, RANBP9 and/or RANBP10, MKLN1, MAEA, RMND5A (or alternatively its paralog RMND5B), GID8, ARMC8, WDR26 and YPEL5. Within this complex, MAEA, RMND5A (or alternatively its paralog RMND5B), GID8, WDR26, and RANBP9 and/or RANBP10 form the catalytic core, while GID4, MKLN1, ARMC8 and YPEL5 have ancillary roles. Interacts with F-actin. Post-translationally, autoubiquitinated as component of the CTLH E3 ubiquitin-protein ligase complex (in vitro).

The protein localises to the cytoplasm. The protein resides in the nucleus. It is found in the nucleoplasm. It localises to the nucleus matrix. Its subcellular location is the cell membrane. The protein localises to the cytoskeleton. The catalysed reaction is S-ubiquitinyl-[E2 ubiquitin-conjugating enzyme]-L-cysteine + [acceptor protein]-L-lysine = [E2 ubiquitin-conjugating enzyme]-L-cysteine + N(6)-ubiquitinyl-[acceptor protein]-L-lysine.. Its function is as follows. Core component of the CTLH E3 ubiquitin-protein ligase complex that selectively accepts ubiquitin from UBE2H and mediates ubiquitination and subsequent proteasomal degradation of the transcription factor HBP1. MAEA and RMND5A are both required for catalytic activity of the CTLH E3 ubiquitin-protein ligase complex. MAEA is required for normal cell proliferation. The CTLH E3 ubiquitin-protein ligase complex is not required for the degradation of enzymes involved in gluconeogenesis, such as FBP1. Plays a role in erythroblast enucleation during erythrocyte maturation and in the development of mature macrophages. Mediates the attachment of erythroid cell to mature macrophages; this MAEA-mediated contact inhibits erythroid cell apoptosis. Participates in erythroblastic island formation, which is the functional unit of definitive erythropoiesis. Associates with F-actin to regulate actin distribution in erythroblasts and macrophages. May contribute to nuclear architecture and cells division events. This chain is E3 ubiquitin-protein transferase MAEA (MAEA), found in Macaca fascicularis (Crab-eating macaque).